Consider the following 182-residue polypeptide: MSEAPKKRWYVVQAFSGFEGRVAQSLREHIKMHGMEELFGEVLVPTEEVVEMRAGQRRKSERKFFPGYVLVQMIMNDESWHLVRSVPRVMGFIGGTSDRPAPITDKEADAILNRLEKASEAPRPRTMYEAGEVVRVNEGPFADFNGTVEEVDYEKSRLKVSVSIFGRATPVELEFGQVEKLD.

The KOW domain occupies 131-161 (GEVVRVNEGPFADFNGTVEEVDYEKSRLKVS).

It belongs to the NusG family.

Its function is as follows. Participates in transcription elongation, termination and antitermination. The polypeptide is Transcription termination/antitermination protein NusG (Vibrio parahaemolyticus serotype O3:K6 (strain RIMD 2210633)).